The sequence spans 389 residues: Dual-specificity RNA methyltransferase RlmN (389 aa).

The Proton acceptor role is filled by Glu110. Residues 116–355 enclose the Radical SAM core domain; the sequence is EKDRATLCVS…TIVRKTRGDD (240 aa). Cys123 and Cys360 are joined by a disulfide. [4Fe-4S] cluster is bound by residues Cys130, Cys134, and Cys137. S-adenosyl-L-methionine is bound by residues 184–185, Ser216, 238–240, and Asn317; these read GE and SLH. The active-site S-methylcysteine intermediate is Cys360.

The protein belongs to the radical SAM superfamily. RlmN family. It depends on [4Fe-4S] cluster as a cofactor.

Its subcellular location is the cytoplasm. It carries out the reaction adenosine(2503) in 23S rRNA + 2 reduced [2Fe-2S]-[ferredoxin] + 2 S-adenosyl-L-methionine = 2-methyladenosine(2503) in 23S rRNA + 5'-deoxyadenosine + L-methionine + 2 oxidized [2Fe-2S]-[ferredoxin] + S-adenosyl-L-homocysteine. The enzyme catalyses adenosine(37) in tRNA + 2 reduced [2Fe-2S]-[ferredoxin] + 2 S-adenosyl-L-methionine = 2-methyladenosine(37) in tRNA + 5'-deoxyadenosine + L-methionine + 2 oxidized [2Fe-2S]-[ferredoxin] + S-adenosyl-L-homocysteine. Its function is as follows. Specifically methylates position 2 of adenine 2503 in 23S rRNA and position 2 of adenine 37 in tRNAs. m2A2503 modification seems to play a crucial role in the proofreading step occurring at the peptidyl transferase center and thus would serve to optimize ribosomal fidelity. The sequence is that of Dual-specificity RNA methyltransferase RlmN from Erwinia tasmaniensis (strain DSM 17950 / CFBP 7177 / CIP 109463 / NCPPB 4357 / Et1/99).